Reading from the N-terminus, the 525-residue chain is Ankyrin repeat domain-containing protein SOWAHC (525 aa).

A disordered region spans residues C84–T263. S88 is modified (phosphoserine). Low complexity predominate over residues A101–P112. 3 positions are modified to phosphoserine: S126, S213, and S226. Residues S230–D241 are compositionally biased toward gly residues. Residues S242–S251 show a composition bias toward low complexity. ANK repeat units lie at residues T301–L330 and G340–I370. The segment at D434–G525 is disordered. The span at I468 to F477 shows a compositional bias: basic residues. Residues R489–V509 show a composition bias toward basic and acidic residues.

This sequence belongs to the SOWAH family.

The protein is Ankyrin repeat domain-containing protein SOWAHC (SOWAHC) of Homo sapiens (Human).